Consider the following 310-residue polypeptide: Methionyl-tRNA formyltransferase (310 aa).

109 to 112 serves as a coordination point for (6S)-5,6,7,8-tetrahydrofolate; that stretch reads SLLP.

The protein belongs to the Fmt family.

The enzyme catalyses L-methionyl-tRNA(fMet) + (6R)-10-formyltetrahydrofolate = N-formyl-L-methionyl-tRNA(fMet) + (6S)-5,6,7,8-tetrahydrofolate + H(+). Its function is as follows. Attaches a formyl group to the free amino group of methionyl-tRNA(fMet). The formyl group appears to play a dual role in the initiator identity of N-formylmethionyl-tRNA by promoting its recognition by IF2 and preventing the misappropriation of this tRNA by the elongation apparatus. This chain is Methionyl-tRNA formyltransferase, found in Pseudomonas entomophila (strain L48).